The following is a 523-amino-acid chain: REST corepressor 2 (523 aa).

The disordered stretch occupies residues 1 to 43 (MPSVMEKPSAGSGILSRSRAKTAPNGGQPHSEDDSSEEEHSHD). A compositionally biased stretch (basic and acidic residues) spans 30–43 (HSEDDSSEEEHSHD). Ser-31, Ser-35, Ser-36, and Ser-63 each carry phosphoserine. An ELM2 domain is found at 44 to 129 (SMIRVGTNYQ…KSLADLANFT (86 aa)). Lys-88 is covalently cross-linked (Glycyl lysine isopeptide (Lys-Gly) (interchain with G-Cter in SUMO2)). The region spanning 130–181 (PFPDEWTVEDKVLFEQAFGFHGKCFQRIQQMLPDKLIPSLVKYYYSWKKTRS) is the SANT 1 domain. The disordered stretch occupies residues 185-265 (VMDRQARRLG…RRRPPKGMYL (81 aa)). At Ser-202 the chain carries Phosphoserine. Basic residues predominate over residues 248–260 (YRHHPLRTRRRPP). The stretch at 283 to 314 (TLRGLDSQLISLKRQVQSMKQTNSSLRQALEG) forms a coiled coil. The SANT 2 domain occupies 327 to 378 (KFNSRWTTDEQLLAVQAIRRYGKDFGAIAEVIGNKTLTQVKTFFVSYRRRFN). The interval 387–523 (EAEQDGAPTA…AQLEPPAPSL (137 aa)) is disordered. A compositionally biased stretch (pro residues) spans 432–459 (SVPPAPPPPPPPTSLSQPPPLLRPPLPT). The segment covering 460–482 (APTLLRQPPPLQQGRFLQPRLAP) has biased composition (low complexity). An Asymmetric dimethylarginine modification is found at Arg-479.

Belongs to the CoREST family.

The protein localises to the nucleus. Its function is as follows. May act as a component of a corepressor complex that represses transcription. The protein is REST corepressor 2 (Rcor2) of Rattus norvegicus (Rat).